A 676-amino-acid chain; its full sequence is tRNA 5-methylaminomethyl-2-thiouridine biosynthesis bifunctional protein MnmC (676 aa).

Positions 1-241 (MFTVTPAKIY…KRECLCGIKN (241 aa)) are tRNA (mnm(5)s(2)U34)-methyltransferase. The tract at residues 268-676 (IGGGIASLFT…RKLLKGTEIK (409 aa)) is FAD-dependent cmnm(5)s(2)U34 oxidoreductase.

The protein in the N-terminal section; belongs to the methyltransferase superfamily. tRNA (mnm(5)s(2)U34)-methyltransferase family. In the C-terminal section; belongs to the DAO family. It depends on FAD as a cofactor.

It is found in the cytoplasm. The enzyme catalyses 5-aminomethyl-2-thiouridine(34) in tRNA + S-adenosyl-L-methionine = 5-methylaminomethyl-2-thiouridine(34) in tRNA + S-adenosyl-L-homocysteine + H(+). Functionally, catalyzes the last two steps in the biosynthesis of 5-methylaminomethyl-2-thiouridine (mnm(5)s(2)U) at the wobble position (U34) in tRNA. Catalyzes the FAD-dependent demodification of cmnm(5)s(2)U34 to nm(5)s(2)U34, followed by the transfer of a methyl group from S-adenosyl-L-methionine to nm(5)s(2)U34, to form mnm(5)s(2)U34. The chain is tRNA 5-methylaminomethyl-2-thiouridine biosynthesis bifunctional protein MnmC from Histophilus somni (strain 129Pt) (Haemophilus somnus).